The following is an 86-amino-acid chain: Small ribosomal subunit protein bS20 (86 aa).

The protein belongs to the bacterial ribosomal protein bS20 family.

Its function is as follows. Binds directly to 16S ribosomal RNA. In Bifidobacterium longum (strain DJO10A), this protein is Small ribosomal subunit protein bS20.